Here is a 450-residue protein sequence, read N- to C-terminus: TATA box-binding protein-associated factor RNA polymerase I subunit A (450 aa).

In terms of assembly, component of the transcription factor SL1/TIF-IB complex, composed of TBP and at least TAF1A, TAF1B, TAF1C and TAF1D. In the complex interacts directly with TBP, TAF1A and TAF1B. Interaction of the SL1/TIF-IB subunits with TBP excludes interaction of TBP with the transcription factor IID (TFIID) subunits. Interacts with UBFT. Interacts with CEBPA (isoform 1 and isoform 4). Part of Pol I pre-initiation complex (PIC), in which Pol I core assembles with RRN3 and promoter-bound UTBF and SL1/TIF-IB complex.

The protein localises to the nucleus. Its subcellular location is the nucleolus. Functionally, component of the transcription factor SL1/TIF-IB complex, which is involved in the assembly of the PIC (pre-initiation complex) during RNA polymerase I-dependent transcription. The rate of PIC formation probably is primarily dependent on the rate of association of SL1/TIF-IB with the rDNA promoter. SL1/TIF-IB is involved in stabilization of nucleolar transcription factor 1/UBTF on rDNA. Formation of SL1/TIF-IB excludes the association of TBP with TFIID subunits. This is TATA box-binding protein-associated factor RNA polymerase I subunit A (TAF1A) from Homo sapiens (Human).